We begin with the raw amino-acid sequence, 1191 residues long: DNA-directed RNA polymerase subunit beta (1191 aa).

Residues 1164–1191 (EEEDLQPADALNIAPQPDTEEEPVESFE) form a disordered region. Acidic residues predominate over residues 1181–1191 (DTEEEPVESFE).

It belongs to the RNA polymerase beta chain family. The RNAP catalytic core consists of 2 alpha, 1 beta, 1 beta' and 1 omega subunit. When a sigma factor is associated with the core the holoenzyme is formed, which can initiate transcription.

The catalysed reaction is RNA(n) + a ribonucleoside 5'-triphosphate = RNA(n+1) + diphosphate. Its function is as follows. DNA-dependent RNA polymerase catalyzes the transcription of DNA into RNA using the four ribonucleoside triphosphates as substrates. In Lysinibacillus sphaericus (strain C3-41), this protein is DNA-directed RNA polymerase subunit beta.